We begin with the raw amino-acid sequence, 228 residues long: Endolytic peptidoglycan transglycosylase RlpA (228 aa).

The signal sequence occupies residues 1-23 (MIQRHKLIVLIFLLIFCLSGCNT).

The protein belongs to the RlpA family.

Lytic transglycosylase with a strong preference for naked glycan strands that lack stem peptides. The chain is Endolytic peptidoglycan transglycosylase RlpA from Rickettsia felis (strain ATCC VR-1525 / URRWXCal2) (Rickettsia azadi).